The sequence spans 451 residues: GABA transporter 1 (451 aa).

The next 11 membrane-spanning stretches (helical) occupy residues 35–55 (CGFH…PYAF), 57–77 (FLGW…TFYS), 115–135 (VGPI…LLGG), 153–173 (LFEF…FPSF), 182–202 (LSLL…IYIG), 222–242 (VFGI…GIIP), 262–282 (MCYL…YWAF), 308–328 (FIFL…VVYL), 356–376 (LVVR…LPFF), 382–402 (LLGA…FFNF), and 411–431 (FIFW…VIAM).

This sequence belongs to the amino acid/polyamine transporter 2 family. Amino acid/auxin permease (AAAP) (TC 2.A.18.2) subfamily. As to expression, highly expressed in flowers and at lower levels in roots, leaves and stems.

It is found in the cell membrane. High affinity gamma-aminobutyric acid (GABA) transporter probably involved in GABA uptake into cells. When expressed in a heterologous system (Xenopus oocytes), imports GABA, butylamine, beta- and L-Alanine, 5-aminovaleric acid, 6-aminocaproic acid and 8-aminocaprylic acid, but does not mediate the transport of proline or glycine betaine. The sequence is that of GABA transporter 1 (GAT1) from Arabidopsis thaliana (Mouse-ear cress).